We begin with the raw amino-acid sequence, 543 residues long: MAKLVAFHEESRRSLERGINALADAVKITLGPKGRNVVLEKKYGAPQIVNDGVTIAKEIELEDAYENTGAQLMREVAAKTNDVVGDGTTTATVLAQALIREGLKNVAAGTNPIALKRGMEKAIKTIVDGIAEVAKPVEGDMIAQVATVSAGNDPEVGAMISEAMAKVGKDGVITIEESKSLQTEMEIVEGMQFDRGYISPYFVTDPERMIVQLNNAYLLLTDKKITSIQDLIPTLERVARSGRPLVIIAEDVEGEALATLVVNKLRGVLNVVAVKAPAFGERRKAMLQDIAILTGGQVISEEVGLTLEDVELTMLGEASSVTVTKDTTILVSEKGNKADIQKRVEQLKQQLAETDSEYDKEKLQERIAKLVGGVAVIKVGAATETELKDRKLRLEDALNATKAAVAEGIVPGGGVTLLHLASRIDALLPSLSPEEQTGARIVASALAAPVAQIADNAGAEGAVVVENVRAGDFNYGFNAATGAYEDLVSAGIIDPAKVVRSALQNAGSIAGMVLTTEALVVEKPEPKPAAPANGGMGGMGGMM.

ATP contacts are provided by residues Thr-29–Pro-32, Asp-86–Thr-90, Gly-413, Asn-478–Ala-480, and Asp-494.

It belongs to the chaperonin (HSP60) family. In terms of assembly, forms a cylinder of 14 subunits composed of two heptameric rings stacked back-to-back. Interacts with the co-chaperonin GroES.

It localises to the cytoplasm. It carries out the reaction ATP + H2O + a folded polypeptide = ADP + phosphate + an unfolded polypeptide.. In terms of biological role, together with its co-chaperonin GroES, plays an essential role in assisting protein folding. The GroEL-GroES system forms a nano-cage that allows encapsulation of the non-native substrate proteins and provides a physical environment optimized to promote and accelerate protein folding. This is Chaperonin GroEL 2 from Thermosynechococcus vestitus (strain NIES-2133 / IAM M-273 / BP-1).